A 256-amino-acid polypeptide reads, in one-letter code: Hydroxyethylthiazole kinase (256 aa).

Met-38 serves as a coordination point for substrate. ATP is bound by residues Arg-114 and Thr-159. Gly-186 is a binding site for substrate.

The protein belongs to the Thz kinase family. Mg(2+) serves as cofactor.

The enzyme catalyses 5-(2-hydroxyethyl)-4-methylthiazole + ATP = 4-methyl-5-(2-phosphooxyethyl)-thiazole + ADP + H(+). It functions in the pathway cofactor biosynthesis; thiamine diphosphate biosynthesis; 4-methyl-5-(2-phosphoethyl)-thiazole from 5-(2-hydroxyethyl)-4-methylthiazole: step 1/1. In terms of biological role, catalyzes the phosphorylation of the hydroxyl group of 4-methyl-5-beta-hydroxyethylthiazole (THZ). This Streptococcus agalactiae serotype III (strain NEM316) protein is Hydroxyethylthiazole kinase.